The sequence spans 528 residues: Tyrosine--tRNA ligase, cytoplasmic (528 aa).

N-acetylmethionine is present on methionine 1. Glycine 2 carries the post-translational modification N-acetylglycine; in Tyrosine--tRNA ligase, cytoplasmic, N-terminally processed. Tyrosine 39 is an L-tyrosine binding site. Tyrosine 39 provides a ligand contact to trans-resveratrol. The 'HIGH' region signature appears at 44 to 52; sequence TTGKPHVAY. The L-tyrosine site is built by tyrosine 166, glutamine 170, aspartate 173, and glutamine 188. The trans-resveratrol site is built by glutamine 170 and aspartate 173. Residue lysine 197 is modified to N6-acetyllysine. Position 205 is a phosphoserine (serine 205). Lysine 206 bears the N6-acetyllysine mark. The short motif at 222-226 is the 'KMSKS' region element; the sequence is KMSSS. The Nuclear localization signal signature appears at 242-247; it reads KKKLKK. A disordered region spans residues 339–363; that stretch reads AAYPDPSKQKPTAKGPAKSSEPEEI. A tRNA-binding domain is found at 364–468; that stretch reads IPSRLDIRVG…AGSAPGERVF (105 aa). Serine 386 carries the post-translational modification Phosphoserine. An N6-acetyllysine mark is found at lysine 474, lysine 482, and lysine 490.

Belongs to the class-I aminoacyl-tRNA synthetase family. As to quaternary structure, homodimer. Interacts (when binding to resveratrol) with PARP1; interaction stimulates the poly-ADP-ribosyltransferase activity of PARP1.

It is found in the cytoplasm. Its subcellular location is the nucleus. The enzyme catalyses tRNA(Tyr) + L-tyrosine + ATP = L-tyrosyl-tRNA(Tyr) + AMP + diphosphate + H(+). With respect to regulation, resveratrol strongly inhibits the tyrosine--tRNA ligase activity. Tyrosine--tRNA ligase that catalyzes the attachment of tyrosine to tRNA(Tyr) in a two-step reaction: tyrosine is first activated by ATP to form Tyr-AMP and then transferred to the acceptor end of tRNA(Tyr). Also acts as a positive regulator of poly-ADP-ribosylation in the nucleus, independently of its tyrosine--tRNA ligase activity. Activity is switched upon resveratrol-binding: resveratrol strongly inhibits the tyrosine--tRNA ligase activity and promotes relocalization to the nucleus, where YARS1 specifically stimulates the poly-ADP-ribosyltransferase activity of PARP1. This Rattus norvegicus (Rat) protein is Tyrosine--tRNA ligase, cytoplasmic (Yars1).